A 346-amino-acid polypeptide reads, in one-letter code: Phosphoribosylformylglycinamidine cyclo-ligase (346 aa).

It belongs to the AIR synthase family.

It is found in the cytoplasm. It catalyses the reaction 2-formamido-N(1)-(5-O-phospho-beta-D-ribosyl)acetamidine + ATP = 5-amino-1-(5-phospho-beta-D-ribosyl)imidazole + ADP + phosphate + H(+). It functions in the pathway purine metabolism; IMP biosynthesis via de novo pathway; 5-amino-1-(5-phospho-D-ribosyl)imidazole from N(2)-formyl-N(1)-(5-phospho-D-ribosyl)glycinamide: step 2/2. The sequence is that of Phosphoribosylformylglycinamidine cyclo-ligase from Shewanella piezotolerans (strain WP3 / JCM 13877).